Reading from the N-terminus, the 96-residue chain is Co-chaperonin GroES (96 aa).

This sequence belongs to the GroES chaperonin family. As to quaternary structure, heptamer of 7 subunits arranged in a ring. Interacts with the chaperonin GroEL.

Its subcellular location is the cytoplasm. In terms of biological role, together with the chaperonin GroEL, plays an essential role in assisting protein folding. The GroEL-GroES system forms a nano-cage that allows encapsulation of the non-native substrate proteins and provides a physical environment optimized to promote and accelerate protein folding. GroES binds to the apical surface of the GroEL ring, thereby capping the opening of the GroEL channel. The chain is Co-chaperonin GroES from Wolbachia sp. subsp. Brugia malayi (strain TRS).